We begin with the raw amino-acid sequence, 99 residues long: NADH-quinone oxidoreductase subunit K (99 aa).

Helical transmembrane passes span 3–23 (PDNY…GVLL), 28–48 (IVVF…FVAF), and 59–79 (VVAF…LAII).

It belongs to the complex I subunit 4L family. NDH-1 is composed of 14 different subunits. Subunits NuoA, H, J, K, L, M, N constitute the membrane sector of the complex.

Its subcellular location is the cell membrane. The catalysed reaction is a quinone + NADH + 5 H(+)(in) = a quinol + NAD(+) + 4 H(+)(out). Functionally, NDH-1 shuttles electrons from NADH, via FMN and iron-sulfur (Fe-S) centers, to quinones in the respiratory chain. The immediate electron acceptor for the enzyme in this species is believed to be a menaquinone. Couples the redox reaction to proton translocation (for every two electrons transferred, four hydrogen ions are translocated across the cytoplasmic membrane), and thus conserves the redox energy in a proton gradient. The chain is NADH-quinone oxidoreductase subunit K from Mycobacterium sp. (strain JLS).